We begin with the raw amino-acid sequence, 212 residues long: External core antigen (212 aa).

Positions 1–19 (MQLFHLCLVISCSCPTVQA) are cleaved as a signal peptide. Residues 25–27 (GWL) are HBEAG. A disordered region spans residues 165 to 212 (NAPILSTLPETTVVRRRGRSPRRRTPSPRRRRSQSPRRRRSQSRESQC). Residues 178-205 (VRRRGRSPRRRTPSPRRRRSQSPRRRRS) show a composition bias toward basic residues. The stretch at 184-190 (SPRRRTP) is one 1; half-length repeat. Positions 184–206 (SPRRRTPSPRRRRSQSPRRRRSQ) are 3 X 8 AA repeats of S-P-R-R-R-R-S-Q. Residues 184–212 (SPRRRTPSPRRRRSQSPRRRRSQSRESQC) constitute a propeptide that is removed on maturation. Tandem repeats lie at residues 191–198 (SPRRRRSQ) and 199–206 (SPRRRRSQ).

This sequence belongs to the orthohepadnavirus precore antigen family. In terms of assembly, homodimerizes. Post-translationally, phosphorylated. In terms of processing, cleaved by host furin.

The protein localises to the secreted. Its subcellular location is the host nucleus. Its function is as follows. May regulate immune response to the intracellular capsid in acting as a T-cell tolerogen, by having an immunoregulatory effect which prevents destruction of infected cells by cytotoxic T-cells. This immune regulation may predispose to chronicity during perinatal infections and prevent severe liver injury during adult infections. This Hepatitis B virus genotype B1 subtype adw (isolate Japan/pJDW233/1988) (HBV-B) protein is External core antigen.